Here is a 241-residue protein sequence, read N- to C-terminus: Synaptogyrin (241 aa).

The region spanning 30 to 179 is the MARVEL domain; the sequence is FAMKPQVVIR…CALMAYKRFL (150 aa). Transmembrane regions (helical) follow at residues 34-54, 81-101, 115-135, and 155-175; these read PQVVIRALCWLFSVVVFGCIS, MVGVFGFLASMGFMGGEFLFE, ADMGFSALWTFMYFVAFLYLW, and TAIWFCLFSIVSWALCALMAY. A disordered region spans residues 216–241; sequence ASPFGQPQQGGMEQQQSGMEYQQPTY. The span at 220-241 shows a compositional bias: low complexity; the sequence is GQPQQGGMEQQQSGMEYQQPTY.

The protein belongs to the synaptogyrin family.

The protein localises to the cytoplasmic vesicle membrane. It localises to the cytoplasmic vesicle. It is found in the secretory vesicle membrane. The protein resides in the secretory vesicle. Its subcellular location is the synaptic vesicle membrane. Its function is as follows. Required for the correct formation of synaptic vesicles at nerve terminals and has a role in the regulation of the synaptic vesicle exo-endocytic cycle. This Drosophila melanogaster (Fruit fly) protein is Synaptogyrin.